An 87-amino-acid polypeptide reads, in one-letter code: Colicin-E7 immunity protein (87 aa).

This sequence belongs to the colicins ColE2/ColE8/ColE9 and pyocins S1/S2 family.

This protein is able to protect a cell, which harbors the plasmid ColE7 encoding colicin E7, against colicin E7, it binds specifically to the DNase-type colicin and inhibits its bactericidal activity. Dimeric ImmE7 may possess a RNase activity that cleaves its own mRNA at a specific site and thus autoregulates translational expression of the downstream ceiE7 gene as well as degradation of the upstream ceaE7 mRNA. The protein is Colicin-E7 immunity protein (imm) of Escherichia coli.